The chain runs to 291 residues: Glycine--tRNA ligase alpha subunit (291 aa).

Belongs to the class-II aminoacyl-tRNA synthetase family. As to quaternary structure, tetramer of two alpha and two beta subunits.

The protein localises to the cytoplasm. The catalysed reaction is tRNA(Gly) + glycine + ATP = glycyl-tRNA(Gly) + AMP + diphosphate. The polypeptide is Glycine--tRNA ligase alpha subunit (Trichlorobacter lovleyi (strain ATCC BAA-1151 / DSM 17278 / SZ) (Geobacter lovleyi)).